Reading from the N-terminus, the 1509-residue chain is Myosin-2 heavy chain, non muscle (1509 aa).

Residues 32–85 (SDKTLAWWPTKDADRAFCHVEVTKDDGKNFTVRLENGEEKSQPKNEKNFLGVNP) form the Myosin N-terminal SH3-like domain. The Myosin motor domain occupies 89-787 (DGVEDMGELG…QLAAIEELRE (699 aa)). K133 carries the post-translational modification N6,N6,N6-trimethyllysine. Position 182 to 189 (182 to 189 (GESGAGKT)) interacts with ATP. A disordered region spans residues 623-643 (APAEEEKAAAGGSRNRSTGRG). Actin-binding stretches follow at residues 660 to 682 (LAHL…IPNL) and 766 to 780 (RFGV…GQLA). One can recognise an IQ domain in the interval 790 to 819 (ISKMVVSIQAGARAFLARRMYDKMREQTVS). The alpha-helical tailpiece (S2) stretch occupies residues 848–1226 (LISQRNFQKE…AERDSGAQQR (379 aa)). Residues 848-1509 (LISQRNFQKE…VRAGSARAEE (662 aa)) are a coiled coil. 5 stretches are compositionally biased toward basic and acidic residues: residues 958–1019 (ELKA…KDAL), 1034–1047 (KNTE…RNEL), 1097–1107 (EDARSEVDSLK), 1115–1141 (KSLK…RANV), and 1179–1189 (QVDETKRRLEE). Disordered regions lie at residues 958-1049 (ELKA…ELDD), 1068-1141 (LAQT…RANV), 1170-1195 (AAQA…ASAA), 1213-1259 (ADLD…RLEG), 1352-1425 (VAKE…NREL), and 1474-1509 (QLQD…RAEE). Positions 1227-1252 (RKLNTRISELQSELENAPKTGGASSE) are hinge. Positions 1231–1240 (TRISELQSEL) are enriched in polar residues. Residues 1253 to 1482 (EVKRLEGELE…AQLQDEIDGT (230 aa)) form an alpha-helical tailpiece (LMM) region. The light meromyosin (LMM) stretch occupies residues 1253–1509 (EVKRLEGELE…VRAGSARAEE (257 aa)). The tract at residues 1483–1509 (PSSRGGSTRGASARGASVRAGSARAEE) is nonhelical tailpiece. The segment covering 1484–1509 (SSRGGSTRGASARGASVRAGSARAEE) has biased composition (low complexity). Phosphoserine occurs at positions 1489, 1494, and 1499.

This sequence belongs to the TRAFAC class myosin-kinesin ATPase superfamily. Myosin family. In terms of assembly, myosin II heavy chain is two-headed. It self-assembles into filaments. Hexamer of 2 heavy chain subunits (MHC), 2 alkali light chain subunits (MLC) and 2 regulatory light chain subunits (MLC-2).

Myosin is a protein that binds to F-actin and has ATPase activity that is activated by F-actin. In Acanthamoeba castellanii (Amoeba), this protein is Myosin-2 heavy chain, non muscle.